A 430-amino-acid chain; its full sequence is Probable aspartic-type endopeptidase ARB_07403 (430 aa).

The first 17 residues, 1–17 (MHVSTLLVAVLLPLALS), serve as a signal peptide directing secretion. Residues 18–87 (KPTPRKKTGS…SKATAGSGKE (70 aa)) constitute a propeptide, activation peptide. The tract at residues 66 to 105 (YHPQHISKLPGNSKATAGSGKEGVESQDEKGEVVNNPTNH) is disordered. The span at 87-97 (EGVESQDEKGE) shows a compositional bias: basic and acidic residues. A Peptidase A1 domain is found at 109–427 (FLSPVTIGGQ…DQRGPSISLA (319 aa)). Residue D125 is part of the active site. N306 is a glycosylation site (N-linked (GlcNAc...) asparagine). D314 is a catalytic residue.

It belongs to the peptidase A1 family.

The protein localises to the secreted. In terms of biological role, probable secreted aspartic-type endopeptidase which contributes to virulence. The chain is Probable aspartic-type endopeptidase ARB_07403 from Arthroderma benhamiae (strain ATCC MYA-4681 / CBS 112371) (Trichophyton mentagrophytes).